The sequence spans 389 residues: Phosphoglycerate kinase (389 aa).

Substrate is bound by residues 21-23 (DLN), R36, 59-62 (HLGR), R112, and R145. ATP contacts are provided by residues K196, E313, and 342–345 (GGDT).

The protein belongs to the phosphoglycerate kinase family. Monomer.

The protein resides in the cytoplasm. The catalysed reaction is (2R)-3-phosphoglycerate + ATP = (2R)-3-phospho-glyceroyl phosphate + ADP. It functions in the pathway carbohydrate degradation; glycolysis; pyruvate from D-glyceraldehyde 3-phosphate: step 2/5. The protein is Phosphoglycerate kinase of Histophilus somni (strain 2336) (Haemophilus somnus).